The primary structure comprises 179 residues: Large ribosomal subunit protein uL6 (179 aa).

This sequence belongs to the universal ribosomal protein uL6 family. Part of the 50S ribosomal subunit.

In terms of biological role, this protein binds to the 23S rRNA, and is important in its secondary structure. It is located near the subunit interface in the base of the L7/L12 stalk, and near the tRNA binding site of the peptidyltransferase center. This is Large ribosomal subunit protein uL6 from Akkermansia muciniphila (strain ATCC BAA-835 / DSM 22959 / JCM 33894 / BCRC 81048 / CCUG 64013 / CIP 107961 / Muc).